A 364-amino-acid polypeptide reads, in one-letter code: D-alanine--D-alanine ligase (364 aa).

An ATP-grasp domain is found at 146–352 (KLCAMNAGIA…FAELVEKLLL (207 aa)). An ATP-binding site is contributed by 179–234 (TKRFDWPLFVKPASLGSSVGISKVRNAEELAAALENACGLDSKALVEAAISGREIE). Mg(2+) contacts are provided by Asp-305, Glu-319, and Asn-321.

Belongs to the D-alanine--D-alanine ligase family. Mg(2+) is required as a cofactor. It depends on Mn(2+) as a cofactor.

It localises to the cytoplasm. It carries out the reaction 2 D-alanine + ATP = D-alanyl-D-alanine + ADP + phosphate + H(+). It participates in cell wall biogenesis; peptidoglycan biosynthesis. Functionally, cell wall formation. In Chlorobaculum tepidum (strain ATCC 49652 / DSM 12025 / NBRC 103806 / TLS) (Chlorobium tepidum), this protein is D-alanine--D-alanine ligase.